Here is a 160-residue protein sequence, read N- to C-terminus: Peptidyl-prolyl cis-trans isomerase CYP18-1 (160 aa).

Residues 3-153 (VTLHTNLGDI…AEIRLNRVTI (151 aa)) enclose the PPIase cyclophilin-type domain.

The protein belongs to the cyclophilin-type PPIase family. As to expression, ubiquitous.

It localises to the cytoplasm. It carries out the reaction [protein]-peptidylproline (omega=180) = [protein]-peptidylproline (omega=0). In terms of biological role, PPIases accelerate the folding of proteins. It catalyzes the cis-trans isomerization of proline imidic peptide bonds in oligopeptides. This Arabidopsis thaliana (Mouse-ear cress) protein is Peptidyl-prolyl cis-trans isomerase CYP18-1 (CYP18-1).